The chain runs to 444 residues: Tol-Pal system protein TolB (444 aa).

The signal sequence occupies residues Met1 to Gly31.

Belongs to the TolB family. The Tol-Pal system is composed of five core proteins: the inner membrane proteins TolA, TolQ and TolR, the periplasmic protein TolB and the outer membrane protein Pal. They form a network linking the inner and outer membranes and the peptidoglycan layer.

The protein resides in the periplasm. Part of the Tol-Pal system, which plays a role in outer membrane invagination during cell division and is important for maintaining outer membrane integrity. This Rhodopseudomonas palustris (strain ATCC BAA-98 / CGA009) protein is Tol-Pal system protein TolB.